The sequence spans 177 residues: 3-isopropylmalate dehydratase small subunit 1 (177 aa).

The segment at 157–177 is disordered; it reads GRFPGEEPGAEASTETASAAE. Positions 162–177 are enriched in low complexity; sequence EEPGAEASTETASAAE.

The protein belongs to the LeuD family. LeuD type 2 subfamily. As to quaternary structure, heterodimer of LeuC and LeuD.

It catalyses the reaction (2R,3S)-3-isopropylmalate = (2S)-2-isopropylmalate. It participates in amino-acid biosynthesis; L-leucine biosynthesis; L-leucine from 3-methyl-2-oxobutanoate: step 2/4. Catalyzes the isomerization between 2-isopropylmalate and 3-isopropylmalate, via the formation of 2-isopropylmaleate. The sequence is that of 3-isopropylmalate dehydratase small subunit 1 (leuD1) from Deinococcus radiodurans (strain ATCC 13939 / DSM 20539 / JCM 16871 / CCUG 27074 / LMG 4051 / NBRC 15346 / NCIMB 9279 / VKM B-1422 / R1).